The following is a 124-amino-acid chain: MPTINQLIRLGRERKVEKPKAPALQGNPQKRGVCVRVTTMTPKKPNSALRKIARVRLSNGIEVTAYIPGIGHNLQEHSVVLVRGGRVKDLPGIRYKIIRGTLDTAGVENRKQSRSKYGAKRPKK.

Asp89 carries the post-translational modification 3-methylthioaspartic acid. The interval 104-124 (TAGVENRKQSRSKYGAKRPKK) is disordered. The segment covering 112 to 124 (QSRSKYGAKRPKK) has biased composition (basic residues).

This sequence belongs to the universal ribosomal protein uS12 family. In terms of assembly, part of the 30S ribosomal subunit. Contacts proteins S8 and S17. May interact with IF1 in the 30S initiation complex.

Its function is as follows. With S4 and S5 plays an important role in translational accuracy. Functionally, interacts with and stabilizes bases of the 16S rRNA that are involved in tRNA selection in the A site and with the mRNA backbone. Located at the interface of the 30S and 50S subunits, it traverses the body of the 30S subunit contacting proteins on the other side and probably holding the rRNA structure together. The combined cluster of proteins S8, S12 and S17 appears to hold together the shoulder and platform of the 30S subunit. In Pseudothermotoga lettingae (strain ATCC BAA-301 / DSM 14385 / NBRC 107922 / TMO) (Thermotoga lettingae), this protein is Small ribosomal subunit protein uS12.